We begin with the raw amino-acid sequence, 291 residues long: Potassium-transporting ATPase subunit beta (291 aa).

Residues M1 to R36 are Cytoplasmic-facing. Residues W37 to L57 traverse the membrane as a helical; Signal-anchor for type II membrane protein segment. At C58–K291 the chain is on the extracellular side. Residues N99, N103, N130, N146, and N161 are each glycosylated (N-linked (GlcNAc...) asparagine). A disulfide bridge links C131 with C152. A disulfide bridge links C162 with C178. N193 and N222 each carry an N-linked (GlcNAc...) asparagine glycan. The segment at S194–K291 is immunoglobulin-like. C201 and C263 are disulfide-bonded.

Belongs to the X(+)/potassium ATPases subunit beta family. The ATPase pump is composed of two subunits: alpha (catalytic) and beta (regulatory). Interacts with alpha subunit ATP12A; this interaction is required for the formation of a functionally active pump and targeting at the plasma membrane. Interacts (via N-terminus) with alpha subunit ATP4A (via the P-domain). Post-translationally, N-glycosylation is necessary for assembly and functional expression of the pump at the plasma membrane.

Its subcellular location is the apical cell membrane. It is found in the cell membrane. In terms of biological role, the beta subunit of the gastric H(+)/K(+) ATPase pump which transports H(+) ions in exchange for K(+) ions across the apical membrane of parietal cells. Plays a structural and regulatory role in the assembly and membrane targeting of a functionally active pump. Within a transport cycle, the transfer of a H(+) ion across the membrane is coupled to ATP hydrolysis and is associated with a transient phosphorylation of the alpha subunit that shifts the pump conformation from inward-facing (E1) to outward-facing state (E2). Interacts with the phosphorylation domain of the alpha subunit and functions as a ratchet, stabilizing the lumenal-open E2 conformation and preventing the reverse reaction of the transport cycle. The protein is Potassium-transporting ATPase subunit beta (ATP4B) of Oryctolagus cuniculus (Rabbit).